The primary structure comprises 121 residues: MNCFKILHRIKTGKEGFMVFYISLFLILWLAAGFAVGMKQVYVDQLFDKAVIERLEKEANDHGHADRMIKQRVLYIAAVTVSGFISVYYEMKTIPQRRNIRKIEKNIMKLNQAKKRRMKRK.

2 helical membrane-spanning segments follow: residues Gly16–Val36 and Leu74–Ile94.

The protein resides in the cell membrane. This is an uncharacterized protein from Bacillus subtilis (strain 168).